The primary structure comprises 141 residues: Large ribosomal subunit protein uL13 (141 aa).

Belongs to the universal ribosomal protein uL13 family. In terms of assembly, part of the 50S ribosomal subunit.

Its function is as follows. This protein is one of the early assembly proteins of the 50S ribosomal subunit, although it is not seen to bind rRNA by itself. It is important during the early stages of 50S assembly. The chain is Large ribosomal subunit protein uL13 from Deinococcus deserti (strain DSM 17065 / CIP 109153 / LMG 22923 / VCD115).